The chain runs to 85 residues: UPF0386 protein RHECIAT_CH0001945 (85 aa).

It belongs to the UPF0386 family.

The protein is UPF0386 protein RHECIAT_CH0001945 of Rhizobium etli (strain CIAT 652).